The sequence spans 355 residues: 3-isopropylmalate dehydrogenase (355 aa).

Residues R90, R100, R128, and D222 each coordinate substrate. Residues D222, D246, and D250 each contribute to the Mg(2+) site. 280 to 292 (GSAPDIAGKGVAN) provides a ligand contact to NAD(+).

This sequence belongs to the isocitrate and isopropylmalate dehydrogenases family. LeuB type 1 subfamily. Homodimer. Mg(2+) serves as cofactor. Mn(2+) is required as a cofactor.

The protein localises to the cytoplasm. The enzyme catalyses (2R,3S)-3-isopropylmalate + NAD(+) = 4-methyl-2-oxopentanoate + CO2 + NADH. It functions in the pathway amino-acid biosynthesis; L-leucine biosynthesis; L-leucine from 3-methyl-2-oxobutanoate: step 3/4. Its function is as follows. Catalyzes the oxidation of 3-carboxy-2-hydroxy-4-methylpentanoate (3-isopropylmalate) to 3-carboxy-4-methyl-2-oxopentanoate. The product decarboxylates to 4-methyl-2 oxopentanoate. This is 3-isopropylmalate dehydrogenase from Cupriavidus metallidurans (strain ATCC 43123 / DSM 2839 / NBRC 102507 / CH34) (Ralstonia metallidurans).